Here is a 570-residue protein sequence, read N- to C-terminus: Cytoplasmic polyadenylation element-binding protein 2 (570 aa).

Residues 434–516 (LVAFIGGVPR…KRVEIKPYFF (83 aa)) form the RRM domain.

In terms of tissue distribution, expressed specifically in the spermatogenic germ line.

In terms of biological role, cytoplasmic polyadenylation element binding protein that binds to and regulates the translation of specific mRNAs. Not required for oogenesis. The protein is Cytoplasmic polyadenylation element-binding protein 2 (cpb-2) of Caenorhabditis elegans.